Consider the following 717-residue polypeptide: Polyribonucleotide nucleotidyltransferase (717 aa).

Mg(2+) contacts are provided by Asp496 and Asp502. The 60-residue stretch at 563–622 (PRLLSFKIDPEMIGLVIGPGGKTIKGITEETGVKIDIDDDGTVTIAAADGEKAKQACNII) folds into the KH domain. The 69-residue stretch at 632–700 (GDVYVGRVTR…SKGRVNLTRL (69 aa)) folds into the S1 motif domain.

This sequence belongs to the polyribonucleotide nucleotidyltransferase family. The cofactor is Mg(2+).

The protein localises to the cytoplasm. The enzyme catalyses RNA(n+1) + phosphate = RNA(n) + a ribonucleoside 5'-diphosphate. Its function is as follows. Involved in mRNA degradation. Catalyzes the phosphorolysis of single-stranded polyribonucleotides processively in the 3'- to 5'-direction. The sequence is that of Polyribonucleotide nucleotidyltransferase from Trichodesmium erythraeum (strain IMS101).